Consider the following 276-residue polypeptide: Large ribosomal subunit protein uL2 (276 aa).

2 disordered regions span residues 26-45 (RSTP…GRNC) and 224-276 (AMNP…RGQK). A compositionally biased stretch (basic residues) spans 259–276 (RDKKKASSKLIIKRRGQK).

This sequence belongs to the universal ribosomal protein uL2 family. Part of the 50S ribosomal subunit. Forms a bridge to the 30S subunit in the 70S ribosome.

Its function is as follows. One of the primary rRNA binding proteins. Required for association of the 30S and 50S subunits to form the 70S ribosome, for tRNA binding and peptide bond formation. It has been suggested to have peptidyltransferase activity; this is somewhat controversial. Makes several contacts with the 16S rRNA in the 70S ribosome. This Oleidesulfovibrio alaskensis (strain ATCC BAA-1058 / DSM 17464 / G20) (Desulfovibrio alaskensis) protein is Large ribosomal subunit protein uL2.